Reading from the N-terminus, the 469-residue chain is Ufm1-specific protease 2 (469 aa).

The residue at position 1 (M1) is an N-acetylmethionine. Residues C302, D426, and H428 contribute to the active site.

This sequence belongs to the peptidase C78 family.

The protein localises to the endoplasmic reticulum. Its subcellular location is the cytoplasm. It localises to the nucleus. Its function is as follows. Thiol-dependent isopeptidase that specifically cleaves UFM1, a ubiquitin-like modifier protein, from conjugated proteins, such as CD274/PD-L1, CYB5R3, DDRGK1, MRE11, RPL26/uL24, TRIP4 and RPL26/uL24. While it is also able to mediate the processing of UFM1 precursors, a prerequisite for conjugation reactions, UFSP2 mainly acts as a protein deUFMylase that mediates deconjugation of UFM1 from target proteins. Mediates deUFMylation of RPL26/uL24, a critical step to release the UFM1 ribosome E3 ligase (UREL) complex during the recycling of 60S ribosome subunits from the endoplasmic reticulum. Catalyzes deUFMylation of TRIP4, regulating intracellular nuclear receptors transactivation and thereby regulate cell proliferation and differentiation. In Pongo abelii (Sumatran orangutan), this protein is Ufm1-specific protease 2.